The primary structure comprises 151 residues: Phosphoribosyl-AMP cyclohydrolase (151 aa).

A compositionally biased stretch (polar residues) spans 1–13; that stretch reads MMTLTFASPPQNK. The disordered stretch occupies residues 1–20; the sequence is MMTLTFASPPQNKSDLETGP. Asp-93 contributes to the Mg(2+) binding site. A Zn(2+)-binding site is contributed by Cys-94. Mg(2+)-binding residues include Asp-95 and Asp-97. The Zn(2+) site is built by Cys-112 and Cys-119.

It belongs to the PRA-CH family. Homodimer. Mg(2+) is required as a cofactor. Requires Zn(2+) as cofactor.

The protein localises to the cytoplasm. The enzyme catalyses 1-(5-phospho-beta-D-ribosyl)-5'-AMP + H2O = 1-(5-phospho-beta-D-ribosyl)-5-[(5-phospho-beta-D-ribosylamino)methylideneamino]imidazole-4-carboxamide. It functions in the pathway amino-acid biosynthesis; L-histidine biosynthesis; L-histidine from 5-phospho-alpha-D-ribose 1-diphosphate: step 3/9. Functionally, catalyzes the hydrolysis of the adenine ring of phosphoribosyl-AMP. This is Phosphoribosyl-AMP cyclohydrolase from Sinorhizobium medicae (strain WSM419) (Ensifer medicae).